Reading from the N-terminus, the 638-residue chain is Threonine--tRNA ligase (638 aa).

In terms of domain architecture, TGS spans 1 to 61 (MPVVTLPDGS…EADAEVALVT (61 aa)). The tract at residues 242 to 533 (DHRKLGKALD…LTEHYAGQYP (292 aa)) is catalytic. Zn(2+) is bound by residues Cys-333, His-384, and His-510.

It belongs to the class-II aminoacyl-tRNA synthetase family. Homodimer. Zn(2+) serves as cofactor.

The protein localises to the cytoplasm. It carries out the reaction tRNA(Thr) + L-threonine + ATP = L-threonyl-tRNA(Thr) + AMP + diphosphate + H(+). Catalyzes the attachment of threonine to tRNA(Thr) in a two-step reaction: L-threonine is first activated by ATP to form Thr-AMP and then transferred to the acceptor end of tRNA(Thr). Also edits incorrectly charged L-seryl-tRNA(Thr). In Methylococcus capsulatus (strain ATCC 33009 / NCIMB 11132 / Bath), this protein is Threonine--tRNA ligase.